We begin with the raw amino-acid sequence, 20 residues long: Citrate synthase (20 aa).

This sequence belongs to the citrate synthase family. In terms of assembly, homohexamer.

It carries out the reaction oxaloacetate + acetyl-CoA + H2O = citrate + CoA + H(+). Its pathway is carbohydrate metabolism; tricarboxylic acid cycle; isocitrate from oxaloacetate: step 1/2. With respect to regulation, allosterically inhibited by NADH. This chain is Citrate synthase (gltA), found in Streptomyces hygroscopicus.